A 534-amino-acid polypeptide reads, in one-letter code: Signal recognition particle subunit SRP54 (534 aa).

Residues 1 to 296 are G-domain; it reads MVLQDLGRRI…EPKAFIQKLL (296 aa). Residues 109-116, 191-195, and 249-252 contribute to the GTP site; these read GLQGAGKT, DTSGR, and TKTD. The interval 297-534 is M-domain; it reads GMGDMAGLVE…GGGGGRGRGR (238 aa).

It belongs to the GTP-binding SRP family. SRP54 subfamily. As to quaternary structure, fungal signal recognition particle consists of a 7S RNA molecule (scR1) and at least six protein subunits: srp72, srp68, srpA/srp54, sec65, srp21 and srp14.

It localises to the cytoplasm. The protein localises to the endoplasmic reticulum. The catalysed reaction is GTP + H2O = GDP + phosphate + H(+). Functionally, signal-recognition-particle (SRP) assembly has a crucial role in targeting secretory proteins to the rough endoplasmic reticulum (ER) membrane. SRP is required for the cotranslational protein translocation for ER import and preferentially recognizes strongly hydrophobic signal sequences. It is involved in targeting the nascent chain-ribosome (RNC) complex to the ER and is proposed to participate in the arrest of nascent chain elongation during membrane targeting. srpA/srp54 binds to the signal sequence of presecretory protein when they emerge from the ribosomes. srpA/srp54 interacts with the scR1 RNA and mediates the association of the resulting SRP-RNC complex with the signal recognition particle receptor (SR) via its alpha subunit srp101. Both, srpA/srp54 and srp101, are locked in their GTP bound forms in the SRP-RNC-SR complex, which dissociates upon transferring the signal sequence to the protein-conducting channel (translocon). After signal sequence transfer, srpA/srp54 and srp101 act as reciprocal GTPase-activating proteins (GAPs), thereby resolving their association. This is Signal recognition particle subunit SRP54 (srpA) from Aspergillus niger.